A 573-amino-acid polypeptide reads, in one-letter code: Urease subunit alpha 2 (573 aa).

Residues 136 to 573 (GAIDAHVHLI…LPMAQRYFLF (438 aa)) enclose the Urease domain. 3 residues coordinate Ni(2+): histidine 141, histidine 143, and lysine 224. Lysine 224 bears the N6-carboxylysine mark. Position 226 (histidine 226) interacts with substrate. Ni(2+) contacts are provided by histidine 253 and histidine 279. The active-site Proton donor is the histidine 327. Ni(2+) is bound at residue aspartate 367.

It belongs to the metallo-dependent hydrolases superfamily. Urease alpha subunit family. May form a heterohexamer of 3 UreC (alpha) and 3 UreAB (gamma/beta) subunits. May also form a heterotrimer of UreA (gamma), UreB (beta) and UreC (alpha) subunits. Three heterotrimers associate to form the active enzyme. It depends on Ni cation as a cofactor. In terms of processing, carboxylation allows a single lysine to coordinate two nickel ions.

It localises to the cytoplasm. It carries out the reaction urea + 2 H2O + H(+) = hydrogencarbonate + 2 NH4(+). Its pathway is nitrogen metabolism; urea degradation; CO(2) and NH(3) from urea (urease route): step 1/1. The polypeptide is Urease subunit alpha 2 (Streptomyces avermitilis (strain ATCC 31267 / DSM 46492 / JCM 5070 / NBRC 14893 / NCIMB 12804 / NRRL 8165 / MA-4680)).